The primary structure comprises 403 residues: Creatinase (403 aa).

The active site involves H232.

The protein belongs to the peptidase M24 family. Creatinase subfamily. Homodimer.

It carries out the reaction creatine + H2O = sarcosine + urea. This is Creatinase from Flavobacterium sp. (strain U-188).